The chain runs to 639 residues: Probable potassium transport system protein Kup 1 (639 aa).

The segment covering 1-16 has biased composition (polar residues); that stretch reads MALANTGSEAEPVEQS. The tract at residues 1–21 is disordered; the sequence is MALANTGSEAEPVEQSSHPEI. 12 helical membrane-spanning segments follow: residues 29–49, 67–87, 117–137, 154–174, 182–202, 220–240, 260–280, 302–322, 354–374, 383–403, 411–431, and 436–456; these read LMLGALGVVYGDIGTSPIYAF, ILGVLSLIIWSLTIIVTIKYI, AVILGIGIVGASLFFGDAVIT, PTFQPYVVPLTLVILAVVFAV, VGLVFGPVTAVWFLAIGLSGL, IVAFLIHSPDVAFVTIGAIFL, IVLAWLSIVFPCLLLNYAGQG, ALIPMVVLATAATVIASQAVI, IYMPRVNLLLALVVMMLVVGF, AYGISVTGNMLVTTVLLYVVM, LWVAISLTVLFAFIDIGFFAS, and VFEGGWASLLVAFTIVLGMWT.

This sequence belongs to the HAK/KUP transporter (TC 2.A.72) family.

The protein localises to the cell inner membrane. The enzyme catalyses K(+)(in) + H(+)(in) = K(+)(out) + H(+)(out). Functionally, transport of potassium into the cell. Likely operates as a K(+):H(+) symporter. The polypeptide is Probable potassium transport system protein Kup 1 (Mesorhizobium japonicum (strain LMG 29417 / CECT 9101 / MAFF 303099) (Mesorhizobium loti (strain MAFF 303099))).